We begin with the raw amino-acid sequence, 289 residues long: Oxygen-dependent coproporphyrinogen-III oxidase (289 aa).

Ser-82 serves as a coordination point for substrate. The a divalent metal cation site is built by His-86 and His-96. The active-site Proton donor is His-96. 98–100 contacts substrate; that stretch reads NYR. A divalent metal cation is bound by residues His-130 and His-160. Positions 224 to 259 are important for dimerization; the sequence is YVEFNLVWDRGTIFGLQTNGRIESILMSMPPLVRWE.

It belongs to the aerobic coproporphyrinogen-III oxidase family. In terms of assembly, homodimer. The cofactor is a divalent metal cation.

The protein localises to the cytoplasm. The enzyme catalyses coproporphyrinogen III + O2 + 2 H(+) = protoporphyrinogen IX + 2 CO2 + 2 H2O. It participates in porphyrin-containing compound metabolism; protoporphyrin-IX biosynthesis; protoporphyrinogen-IX from coproporphyrinogen-III (O2 route): step 1/1. In terms of biological role, involved in the heme and chlorophyll biosynthesis. Catalyzes the aerobic oxidative decarboxylation of propionate groups of rings A and B of coproporphyrinogen-III to yield the vinyl groups in protoporphyrinogen-IX. The polypeptide is Oxygen-dependent coproporphyrinogen-III oxidase (Gloeobacter violaceus (strain ATCC 29082 / PCC 7421)).